A 213-amino-acid polypeptide reads, in one-letter code: Kynurenine formamidase (213 aa).

Trp20 is a binding site for substrate. Zn(2+) is bound by residues His50, His54, and Asp56. His60 serves as the catalytic Proton donor/acceptor. Zn(2+)-binding residues include His161 and Glu173.

Belongs to the Cyclase 1 superfamily. KynB family. In terms of assembly, homodimer. Zn(2+) serves as cofactor.

The enzyme catalyses N-formyl-L-kynurenine + H2O = L-kynurenine + formate + H(+). It functions in the pathway amino-acid degradation; L-tryptophan degradation via kynurenine pathway; L-kynurenine from L-tryptophan: step 2/2. Catalyzes the hydrolysis of N-formyl-L-kynurenine to L-kynurenine, the second step in the kynurenine pathway of tryptophan degradation. The sequence is that of Kynurenine formamidase from Pseudomonas paraeruginosa (strain DSM 24068 / PA7) (Pseudomonas aeruginosa (strain PA7)).